Here is a 203-residue protein sequence, read N- to C-terminus: Large ribosomal subunit protein bL25 (203 aa).

It belongs to the bacterial ribosomal protein bL25 family. CTC subfamily. Part of the 50S ribosomal subunit; part of the 5S rRNA/L5/L18/L25 subcomplex. Contacts the 5S rRNA. Binds to the 5S rRNA independently of L5 and L18.

Functionally, this is one of the proteins that binds to the 5S RNA in the ribosome where it forms part of the central protuberance. The protein is Large ribosomal subunit protein bL25 of Pseudomonas savastanoi pv. phaseolicola (strain 1448A / Race 6) (Pseudomonas syringae pv. phaseolicola (strain 1448A / Race 6)).